A 689-amino-acid polypeptide reads, in one-letter code: Elongation factor G (689 aa).

In terms of domain architecture, tr-type G spans 9 to 283 (AKFRNIGIMA…AIVEFMPSPL (275 aa)). Residues 18–25 (AHIDAGKT), 82–86 (DTPGH), and 136–139 (NKMD) each bind GTP.

This sequence belongs to the TRAFAC class translation factor GTPase superfamily. Classic translation factor GTPase family. EF-G/EF-2 subfamily.

It localises to the cytoplasm. Functionally, catalyzes the GTP-dependent ribosomal translocation step during translation elongation. During this step, the ribosome changes from the pre-translocational (PRE) to the post-translocational (POST) state as the newly formed A-site-bound peptidyl-tRNA and P-site-bound deacylated tRNA move to the P and E sites, respectively. Catalyzes the coordinated movement of the two tRNA molecules, the mRNA and conformational changes in the ribosome. The sequence is that of Elongation factor G from Clostridium botulinum (strain Kyoto / Type A2).